We begin with the raw amino-acid sequence, 138 residues long: Mediator of RNA polymerase II transcription subunit 19 (138 aa).

The protein belongs to the Mediator complex subunit 19 family. As to quaternary structure, component of the Mediator complex.

The protein resides in the nucleus. Functionally, component of the Mediator complex, a coactivator involved in the regulated transcription of nearly all RNA polymerase II-dependent genes. Mediator functions as a bridge to convey information from gene-specific regulatory proteins to the basal RNA polymerase II transcription machinery. Mediator is recruited to promoters by direct interactions with regulatory proteins and serves as a scaffold for the assembly of a functional preinitiation complex with RNA polymerase II and the general transcription factors. The chain is Mediator of RNA polymerase II transcription subunit 19 (med19) from Schizosaccharomyces pombe (strain 972 / ATCC 24843) (Fission yeast).